The following is a 188-amino-acid chain: dCTP deaminase (188 aa).

DCTP-binding positions include 111–116 (KSTYAR), 135–137 (TLE), Gln156, Tyr170, and Gln180. The active-site Proton donor/acceptor is Glu137.

It belongs to the dCTP deaminase family. Homotrimer.

It carries out the reaction dCTP + H2O + H(+) = dUTP + NH4(+). The protein operates within pyrimidine metabolism; dUMP biosynthesis; dUMP from dCTP (dUTP route): step 1/2. Catalyzes the deamination of dCTP to dUTP. In Francisella philomiragia subsp. philomiragia (strain ATCC 25017 / CCUG 19701 / FSC 153 / O#319-036), this protein is dCTP deaminase.